The primary structure comprises 415 residues: Phosphopentomutase (415 aa).

6 residues coordinate Mn(2+): Asp-10, Asp-313, His-318, Asp-354, His-355, and His-366.

It belongs to the phosphopentomutase family. Mn(2+) is required as a cofactor.

The protein localises to the cytoplasm. It catalyses the reaction 2-deoxy-alpha-D-ribose 1-phosphate = 2-deoxy-D-ribose 5-phosphate. The catalysed reaction is alpha-D-ribose 1-phosphate = D-ribose 5-phosphate. It functions in the pathway carbohydrate degradation; 2-deoxy-D-ribose 1-phosphate degradation; D-glyceraldehyde 3-phosphate and acetaldehyde from 2-deoxy-alpha-D-ribose 1-phosphate: step 1/2. Isomerase that catalyzes the conversion of deoxy-ribose 1-phosphate (dRib-1-P) and ribose 1-phosphate (Rib-1-P) to deoxy-ribose 5-phosphate (dRib-5-P) and ribose 5-phosphate (Rib-5-P), respectively. This Psychromonas ingrahamii (strain DSM 17664 / CCUG 51855 / 37) protein is Phosphopentomutase.